We begin with the raw amino-acid sequence, 446 residues long: Nuclear distribution protein PAC1-1 (446 aa).

The LisH domain occupies 9–41 (QAEELHKSLIAYLSSINASQSVTTLREELQIGD). Residues 60–86 (ISVVRLQKRILDLESKIASLQAELDSA) adopt a coiled-coil conformation. 8 WD repeats span residues 112–153 (SHRG…RTLK), 155–195 (HTRT…ANIR), 199–239 (GHDH…CVKT), 242–281 (TQGDWVRDVFPSFDGKWLVSGGRDQAATIWEVSSGEARAS), 284–344 (GHEN…IKTL), 346–385 (GHNNWVRGLVFHPGGKYLFSVGDDKTIRCWDLSQEGKLVK), 390–430 (AHEH…TGFR), and 432–446 (VIATGSADSCVRVFM).

It belongs to the WD repeat LIS1/nudF family. In terms of assembly, self-associates. Interacts with NDL1 and dynein.

The protein resides in the cytoplasm. It is found in the cytoskeleton. Its subcellular location is the spindle pole. Positively regulates the activity of the minus-end directed microtubule motor protein dynein. May enhance dynein-mediated microtubule sliding by targeting dynein to the microtubule plus end. Required for nuclear migration during vegetative growth as well as development. Required for retrograde early endosome (EE) transport from the hyphal tip. Required for localization of dynein to the mitotic spindle poles. Recruits additional proteins to the dynein complex at SPBs. The protein is Nuclear distribution protein PAC1-1 of Uncinocarpus reesii (strain UAMH 1704).